The primary structure comprises 183 residues: Adenine phosphoribosyltransferase (183 aa).

Belongs to the purine/pyrimidine phosphoribosyltransferase family. As to quaternary structure, homodimer.

The protein localises to the cytoplasm. The enzyme catalyses AMP + diphosphate = 5-phospho-alpha-D-ribose 1-diphosphate + adenine. It participates in purine metabolism; AMP biosynthesis via salvage pathway; AMP from adenine: step 1/1. Catalyzes a salvage reaction resulting in the formation of AMP, that is energically less costly than de novo synthesis. This chain is Adenine phosphoribosyltransferase, found in Shewanella pealeana (strain ATCC 700345 / ANG-SQ1).